The chain runs to 314 residues: 4-hydroxy-3-methylbut-2-enyl diphosphate reductase (314 aa).

Residue cysteine 12 coordinates [4Fe-4S] cluster. Residues histidine 43 and histidine 81 each contribute to the (2E)-4-hydroxy-3-methylbut-2-enyl diphosphate site. Dimethylallyl diphosphate-binding residues include histidine 43 and histidine 81. Isopentenyl diphosphate is bound by residues histidine 43 and histidine 81. [4Fe-4S] cluster is bound at residue cysteine 103. A (2E)-4-hydroxy-3-methylbut-2-enyl diphosphate-binding site is contributed by histidine 131. Histidine 131 provides a ligand contact to dimethylallyl diphosphate. Position 131 (histidine 131) interacts with isopentenyl diphosphate. The active-site Proton donor is the glutamate 133. Threonine 170 contributes to the (2E)-4-hydroxy-3-methylbut-2-enyl diphosphate binding site. Residue cysteine 198 coordinates [4Fe-4S] cluster. (2E)-4-hydroxy-3-methylbut-2-enyl diphosphate is bound by residues serine 226, asparagine 228, and serine 271. Dimethylallyl diphosphate contacts are provided by serine 226, asparagine 228, and serine 271. Isopentenyl diphosphate-binding residues include serine 226, asparagine 228, and serine 271.

It belongs to the IspH family. [4Fe-4S] cluster is required as a cofactor.

It carries out the reaction isopentenyl diphosphate + 2 oxidized [2Fe-2S]-[ferredoxin] + H2O = (2E)-4-hydroxy-3-methylbut-2-enyl diphosphate + 2 reduced [2Fe-2S]-[ferredoxin] + 2 H(+). It catalyses the reaction dimethylallyl diphosphate + 2 oxidized [2Fe-2S]-[ferredoxin] + H2O = (2E)-4-hydroxy-3-methylbut-2-enyl diphosphate + 2 reduced [2Fe-2S]-[ferredoxin] + 2 H(+). The protein operates within isoprenoid biosynthesis; dimethylallyl diphosphate biosynthesis; dimethylallyl diphosphate from (2E)-4-hydroxy-3-methylbutenyl diphosphate: step 1/1. Its pathway is isoprenoid biosynthesis; isopentenyl diphosphate biosynthesis via DXP pathway; isopentenyl diphosphate from 1-deoxy-D-xylulose 5-phosphate: step 6/6. Catalyzes the conversion of 1-hydroxy-2-methyl-2-(E)-butenyl 4-diphosphate (HMBPP) into a mixture of isopentenyl diphosphate (IPP) and dimethylallyl diphosphate (DMAPP). Acts in the terminal step of the DOXP/MEP pathway for isoprenoid precursor biosynthesis. This Bacillus subtilis (strain 168) protein is 4-hydroxy-3-methylbut-2-enyl diphosphate reductase.